The primary structure comprises 362 residues: 2-aminoethylphosphonate--pyruvate transaminase (362 aa).

Lys-193 carries the N6-(pyridoxal phosphate)lysine modification.

This sequence belongs to the class-V pyridoxal-phosphate-dependent aminotransferase family. PhnW subfamily. Homodimer. Requires pyridoxal 5'-phosphate as cofactor.

It carries out the reaction (2-aminoethyl)phosphonate + pyruvate = phosphonoacetaldehyde + L-alanine. Involved in phosphonate degradation. The polypeptide is 2-aminoethylphosphonate--pyruvate transaminase (Bacteroides fragilis (strain YCH46)).